Here is a 450-residue protein sequence, read N- to C-terminus: tRNA modification GTPase MnmE (450 aa).

Residues Arg24, Glu82, and Lys121 each coordinate (6S)-5-formyl-5,6,7,8-tetrahydrofolate. Residues 218–375 (GMHVVLVGQP…LRQVLLEAVG (158 aa)) enclose the TrmE-type G domain. Asn228 is a binding site for K(+). Residues 228 to 233 (NVGKSS), 247 to 253 (TDIAGTT), 272 to 275 (DTAG), and 356 to 358 (SAR) contribute to the GTP site. Ser232 contacts Mg(2+). Residues Thr247, Ile249, and Thr252 each contribute to the K(+) site. Thr253 is a binding site for Mg(2+). Residue Lys450 coordinates (6S)-5-formyl-5,6,7,8-tetrahydrofolate.

Belongs to the TRAFAC class TrmE-Era-EngA-EngB-Septin-like GTPase superfamily. TrmE GTPase family. Homodimer. Heterotetramer of two MnmE and two MnmG subunits. K(+) serves as cofactor.

The protein localises to the cytoplasm. Exhibits a very high intrinsic GTPase hydrolysis rate. Involved in the addition of a carboxymethylaminomethyl (cmnm) group at the wobble position (U34) of certain tRNAs, forming tRNA-cmnm(5)s(2)U34. This is tRNA modification GTPase MnmE from Laribacter hongkongensis (strain HLHK9).